Reading from the N-terminus, the 473-residue chain is GTPase Der (473 aa).

EngA-type G domains are found at residues 5-170 (PVVA…PEDV) and 178-351 (LKLA…ASSM). GTP is bound by residues 11–18 (GRPNVGKS), 58–62 (DTGGI), 123–126 (NKID), 184–191 (GRPNVGKS), 231–235 (DTAGV), and 296–299 (NKWD). In terms of domain architecture, KH-like spans 352 to 436 (FKVSTNRLTQ…PLKVEFKLNT (85 aa)). Positions 438–473 (PYAGKKTTSSKKLRPGVSEARQKRRNMKYKKGSHKK) are disordered. The span at 459-473 (QKRRNMKYKKGSHKK) shows a compositional bias: basic residues.

Belongs to the TRAFAC class TrmE-Era-EngA-EngB-Septin-like GTPase superfamily. EngA (Der) GTPase family. In terms of assembly, associates with the 50S ribosomal subunit.

Its function is as follows. GTPase that plays an essential role in the late steps of ribosome biogenesis. The protein is GTPase Der of Psychrobacter sp. (strain PRwf-1).